A 246-amino-acid polypeptide reads, in one-letter code: Exosome complex component Rrp41 (246 aa).

The protein belongs to the RNase PH family. Rrp41 subfamily. As to quaternary structure, component of the archaeal exosome complex. Forms a hexameric ring-like arrangement composed of 3 Rrp41-Rrp42 heterodimers. The hexameric ring associates with a trimer of Rrp4 and/or Csl4 subunits.

It localises to the cytoplasm. Its function is as follows. Catalytic component of the exosome, which is a complex involved in RNA degradation. Has 3'-&gt;5' exoribonuclease activity. Can also synthesize heteromeric RNA-tails. The sequence is that of Exosome complex component Rrp41 from Aeropyrum pernix (strain ATCC 700893 / DSM 11879 / JCM 9820 / NBRC 100138 / K1).